Here is a 366-residue protein sequence, read N- to C-terminus: Peptide chain release factor 2 (366 aa).

Glutamine 251 carries the N5-methylglutamine modification.

It belongs to the prokaryotic/mitochondrial release factor family. In terms of processing, methylated by PrmC. Methylation increases the termination efficiency of RF2.

The protein localises to the cytoplasm. Peptide chain release factor 2 directs the termination of translation in response to the peptide chain termination codons UGA and UAA. This is Peptide chain release factor 2 from Campylobacter lari (strain RM2100 / D67 / ATCC BAA-1060).